Reading from the N-terminus, the 512-residue chain is Secreted triacylglycerol lipase LIP5 (512 aa).

A signal peptide spans 1–17 (MMYASLVHWLALAVALA). Cys118 and Cys292 are disulfide-bonded. Ser203 (nucleophile) is an active-site residue. Asn316 carries N-linked (GlcNAc...) asparagine glycosylation. Asp352 is a catalytic residue. Asn361 is a glycosylation site (N-linked (GlcNAc...) asparagine). His386 is an active-site residue. An N-linked (GlcNAc...) asparagine glycan is attached at Asn453. The segment at 480–512 (KGDISPGEGGDHTKESKKAAAKFKAEKKHGKHH) is disordered. A compositionally biased stretch (basic and acidic residues) spans 488 to 497 (GGDHTKESKK). The segment covering 498–512 (AAAKFKAEKKHGKHH) has biased composition (basic residues).

Belongs to the AB hydrolase superfamily. Lipase family. Class Lip subfamily.

The protein localises to the secreted. The catalysed reaction is a triacylglycerol + H2O = a diacylglycerol + a fatty acid + H(+). It carries out the reaction a monoacylglycerol + H2O = glycerol + a fatty acid + H(+). The enzyme catalyses a diacylglycerol + H2O = a monoacylglycerol + a fatty acid + H(+). In terms of biological role, secreted lipase that hydrolyzes acylglycerol lipids such as triacylglycerols and consequently releases free fatty acid. Can hydrolyze 4-nitrophenyl palmitate to release 4-nitrophenol and palmitoic acid. Due to an absence of fatty acid synthase genes in Malassezia species, secretory lipases are essential for the yeast to generate free fatty acids from degradation of sebum and assimilate them as lipid sources for growth. Plays an essential role at the pathogen-host interface during disease progression. The chain is Secreted triacylglycerol lipase LIP5 from Malassezia restricta (strain ATCC 96810 / NBRC 103918 / CBS 7877) (Seborrheic dermatitis infection agent).